Here is a 142-residue protein sequence, read N- to C-terminus: Cytidine deaminase (142 aa).

The 131-residue stretch at 9-139 (RQLEALKRAA…ELLPMAFGPS (131 aa)) folds into the CMP/dCMP-type deaminase domain. Residue 50-52 (NVE) coordinates substrate. C61 serves as a coordination point for Zn(2+). The Proton donor role is filled by E63. Zn(2+) is bound by residues C96 and C99.

Belongs to the cytidine and deoxycytidylate deaminase family. Homodimer. Zn(2+) is required as a cofactor.

It carries out the reaction cytidine + H2O + H(+) = uridine + NH4(+). The catalysed reaction is 2'-deoxycytidine + H2O + H(+) = 2'-deoxyuridine + NH4(+). In terms of biological role, this enzyme scavenges exogenous and endogenous cytidine and 2'-deoxycytidine for UMP synthesis. The sequence is that of Cytidine deaminase (CDD1) from Saccharomyces cerevisiae (strain ATCC 204508 / S288c) (Baker's yeast).